The primary structure comprises 693 residues: MA3 DOMAIN-CONTAINING TRANSLATION REGULATORY FACTOR 2 (693 aa).

Residues Ser-25 to Asp-60 form a disordered region. An MI 1 domain is found at Glu-90–Lys-211. The Nuclear localization signal 1 motif lies at Glu-241 to Asp-248. MI domains are found at residues Asp-254–Ala-375, Val-389–Asn-510, and Glu-560–Gln-681. The Nuclear localization signal 2 signature appears at Val-430–Ala-437. Positions Glu-673–Gly-693 are disordered. Low complexity predominate over residues Lys-683–Gly-693.

The protein belongs to the PDCD4 family. Binds to EIF4A1. The association with ribosomes is modulated by cellular energy status and TOR activity. Mostly expressed in reproductive tissues, such as flower buds and flowers, and, to a lower extent, in vegetative tissues, such as leaves, roots and stems.

The protein localises to the nucleus. Its subcellular location is the cytoplasm. It is found in the cytosol. In terms of biological role, involved in target of rapamycin (TOR)-regulated translation control, especially under energy-deficient conditions. This chain is MA3 DOMAIN-CONTAINING TRANSLATION REGULATORY FACTOR 2, found in Arabidopsis thaliana (Mouse-ear cress).